We begin with the raw amino-acid sequence, 862 residues long: Glucans biosynthesis glucosyltransferase H (862 aa).

The interval 1–25 is disordered; that stretch reads MELPATSGLNAQPGNAEGTTASTRP. Polar residues predominate over residues 7–25; that stretch reads SGLNAQPGNAEGTTASTRP. 5 consecutive transmembrane segments (helical) span residues 188 to 210, 545 to 567, 597 to 619, 626 to 648, and 708 to 730; these read RLTLLALMIAQTVAATWAMSSVL, GVMAYLSAPLWFLFLLLSTALLA, ALFSATATVLFLPKILSVLVLWA, GGAVHLALSMVIEAVFSVLAAPV, and FLWWLSPVVGALIVSILLSVFSS.

This sequence belongs to the glycosyltransferase 2 family. OpgH subfamily.

The protein resides in the cell inner membrane. Its pathway is glycan metabolism; osmoregulated periplasmic glucan (OPG) biosynthesis. Its function is as follows. Involved in the biosynthesis of osmoregulated periplasmic glucans (OPGs). The sequence is that of Glucans biosynthesis glucosyltransferase H from Ralstonia nicotianae (strain ATCC BAA-1114 / GMI1000) (Ralstonia solanacearum).